Here is a 139-residue protein sequence, read N- to C-terminus: D-ribose pyranase (139 aa).

The active-site Proton donor is H20. Residues D28, H106, and 128–130 (YAN) contribute to the substrate site.

It belongs to the RbsD / FucU family. RbsD subfamily. As to quaternary structure, homodecamer.

It is found in the cytoplasm. It catalyses the reaction beta-D-ribopyranose = beta-D-ribofuranose. The protein operates within carbohydrate metabolism; D-ribose degradation; D-ribose 5-phosphate from beta-D-ribopyranose: step 1/2. Catalyzes the interconversion of beta-pyran and beta-furan forms of D-ribose. The protein is D-ribose pyranase of Aeromonas hydrophila subsp. hydrophila (strain ATCC 7966 / DSM 30187 / BCRC 13018 / CCUG 14551 / JCM 1027 / KCTC 2358 / NCIMB 9240 / NCTC 8049).